The sequence spans 354 residues: Probable disease resistance protein At5g45490 (354 aa).

The stretch at 33 to 53 (AKGNLEKKRDDNEEEERLKTE) forms a coiled coil. The region spanning 45–122 (EEEERLKTES…VYAPRVWVSM (78 aa)) is the NB-ARC domain. 91–98 (GEYGVGKT) serves as a coordination point for ATP. Residues 328–354 (DDEVGPVGSTHGQTDSSNRQPANQASS) are disordered. Polar residues predominate over residues 337–354 (THGQTDSSNRQPANQASS).

Its function is as follows. Possible disease resistance protein. The polypeptide is Probable disease resistance protein At5g45490 (Arabidopsis thaliana (Mouse-ear cress)).